Consider the following 180-residue polypeptide: UPF0227 protein YcfP (180 aa).

This sequence belongs to the UPF0227 family.

In Escherichia coli O7:K1 (strain IAI39 / ExPEC), this protein is UPF0227 protein YcfP.